Reading from the N-terminus, the 698-residue chain is Serotransferrin (698 aa).

A signal peptide spans Met1–Ala19. 2 consecutive Transferrin-like domains span residues Val25–Glu347 and Val360–Lys683. Cystine bridges form between Cys28–Cys67 and Cys38–Cys58. Arg42 carries the post-translational modification Dimethylated arginine. Fe(3+)-binding residues include Asp82 and Tyr114. Disulfide bonds link Cys137–Cys213, Cys156–Cys350, Cys177–Cys193, Cys180–Cys196, Cys190–Cys198, Cys246–Cys260, Cys363–Cys395, and Cys373–Cys386. Thr139, Arg143, Ala145, and Gly146 together coordinate hydrogencarbonate. Position 207 (Tyr207) interacts with Fe(3+). His268 is a binding site for Fe(3+). The residue at position 388 (Ser388) is a Phosphoserine. Asp410 and Tyr447 together coordinate Fe(3+). Intrachain disulfides connect Cys420–Cys693, Cys435–Cys656, Cys471–Cys542, Cys495–Cys684, Cys505–Cys519, Cys516–Cys525, Cys582–Cys596, and Cys634–Cys639. Thr473, Arg477, Ala479, and Gly480 together coordinate hydrogencarbonate. Residue Asn512 is glycosylated (N-linked (GlcNAc...) asparagine). Tyr536 provides a ligand contact to Fe(3+). His604 lines the Fe(3+) pocket. At Ser685 the chain carries Phosphoserine.

This sequence belongs to the transferrin family. In terms of assembly, monomer. Part of a complex composed of SLC40A1/ferroportin, TF/transferrin and HEPH/hephaestin that transfers iron from cells to transferrin. In terms of tissue distribution, expressed by the liver and secreted in plasma.

Its subcellular location is the secreted. Transferrins are iron binding transport proteins which can bind two Fe(3+) ions in association with the binding of an anion, usually bicarbonate. It is responsible for the transport of iron from sites of absorption and heme degradation to those of storage and utilization. Serum transferrin may also have a further role in stimulating cell proliferation. In Rattus norvegicus (Rat), this protein is Serotransferrin (Tf).